The sequence spans 488 residues: Inosine-5'-monophosphate dehydrogenase (488 aa).

CBS domains follow at residues 95-153 (VISN…SIKI) and 157-216 (MTQE…AKDE). Residues aspartate 250 and 300–302 (GIG) each bind NAD(+). Residues glycine 302 and glycine 304 each contribute to the K(+) site. IMP is bound at residue serine 305. K(+) is bound at residue cysteine 307. Residue cysteine 307 is the Thioimidate intermediate of the active site. IMP is bound by residues 340–342 (DGG), 363–364 (GS), and 387–391 (YRGMG). The active-site Proton acceptor is the arginine 403. Position 417 (glutamate 417) interacts with IMP. The tract at residues 468–488 (GLAESHPHNIQITKESPNYSF) is disordered. The K(+) site is built by glutamate 471, serine 472, and histidine 473. A compositionally biased stretch (polar residues) spans 475–488 (HNIQITKESPNYSF).

Belongs to the IMPDH/GMPR family. Homotetramer. K(+) is required as a cofactor.

The enzyme catalyses IMP + NAD(+) + H2O = XMP + NADH + H(+). Its pathway is purine metabolism; XMP biosynthesis via de novo pathway; XMP from IMP: step 1/1. Mycophenolic acid (MPA) is a non-competitive inhibitor that prevents formation of the closed enzyme conformation by binding to the same site as the amobile flap. In contrast, mizoribine monophosphate (MZP) is a competitive inhibitor that induces the closed conformation. MPA is a potent inhibitor of mammalian IMPDHs but a poor inhibitor of the bacterial enzymes. MZP is a more potent inhibitor of bacterial IMPDH. Its function is as follows. Catalyzes the conversion of inosine 5'-phosphate (IMP) to xanthosine 5'-phosphate (XMP), the first committed and rate-limiting step in the de novo synthesis of guanine nucleotides, and therefore plays an important role in the regulation of cell growth. The chain is Inosine-5'-monophosphate dehydrogenase from Staphylococcus aureus (strain Mu50 / ATCC 700699).